A 214-amino-acid chain; its full sequence is Adenylate kinase (214 aa).

14–19 (GSGKGT) is an ATP binding site. Residues 32–61 (SVGKVLRTVMESNTAEADVVKKFIKSGKLV) form an NMP region. Residues R38, 59–61 (KLV), 87–90 (GYPR), and Q94 contribute to the AMP site. An LID region spans residues 124 to 162 (GRISCTDCGTIYNKLYCMPKINGVCDICNSSSFQNRVDD). R125 lines the ATP pocket. Zn(2+) is bound by residues C128 and C131. 134–135 (IY) is a binding site for ATP. 2 residues coordinate Zn(2+): C148 and C151. Residues R159 and R170 each coordinate AMP. Q198 lines the ATP pocket.

This sequence belongs to the adenylate kinase family. Monomer.

The protein localises to the cytoplasm. It catalyses the reaction AMP + ATP = 2 ADP. The protein operates within purine metabolism; AMP biosynthesis via salvage pathway; AMP from ADP: step 1/1. In terms of biological role, catalyzes the reversible transfer of the terminal phosphate group between ATP and AMP. Plays an important role in cellular energy homeostasis and in adenine nucleotide metabolism. This Orientia tsutsugamushi (strain Ikeda) (Rickettsia tsutsugamushi) protein is Adenylate kinase.